Reading from the N-terminus, the 538-residue chain is Bifunctional purine biosynthesis protein PurH (538 aa).

The 148-residue stretch at 11–158 folds into the MGS-like domain; it reads PDLHRVRRAL…KNHAYTGVVT (148 aa).

The protein belongs to the PurH family.

The enzyme catalyses (6R)-10-formyltetrahydrofolate + 5-amino-1-(5-phospho-beta-D-ribosyl)imidazole-4-carboxamide = 5-formamido-1-(5-phospho-D-ribosyl)imidazole-4-carboxamide + (6S)-5,6,7,8-tetrahydrofolate. It catalyses the reaction IMP + H2O = 5-formamido-1-(5-phospho-D-ribosyl)imidazole-4-carboxamide. It participates in purine metabolism; IMP biosynthesis via de novo pathway; 5-formamido-1-(5-phospho-D-ribosyl)imidazole-4-carboxamide from 5-amino-1-(5-phospho-D-ribosyl)imidazole-4-carboxamide (10-formyl THF route): step 1/1. Its pathway is purine metabolism; IMP biosynthesis via de novo pathway; IMP from 5-formamido-1-(5-phospho-D-ribosyl)imidazole-4-carboxamide: step 1/1. The polypeptide is Bifunctional purine biosynthesis protein PurH (Bartonella bacilliformis (strain ATCC 35685 / KC583 / Herrer 020/F12,63)).